The chain runs to 184 residues: Signal peptidase I S (184 aa).

Residues 1-18 (MKSENVSKKKSILEWAKA) lie on the Cytoplasmic side of the membrane. A helical transmembrane segment spans residues 19–39 (IVIAVVLALLIRNFIFAPYVV). Topologically, residues 40-184 (DGDSMYPTLH…YPFNEMRKTN (145 aa)) are extracellular. Active-site residues include S43 and K83.

The protein belongs to the peptidase S26 family.

It localises to the cell membrane. The enzyme catalyses Cleavage of hydrophobic, N-terminal signal or leader sequences from secreted and periplasmic proteins.. In terms of biological role, not essential for cell viability, but required for efficient secretion of many proteins. In Bacillus subtilis (strain 168), this protein is Signal peptidase I S (sipS).